A 678-amino-acid chain; its full sequence is Nucleolar protein 9 (678 aa).

Residues 1 to 15 (MPRDKQKRGRRAEAK) show a composition bias toward basic residues. The disordered stretch occupies residues 1-24 (MPRDKQKRGRRAEAKRKRDDVITD). Pumilio repeat units lie at residues 108-143 (EANG…RLFS), 291-334 (GLDN…SLLR), and 382-419 (KILV…SAMD). Positions 477 to 496 (QRSNQESDGTTSSSNTSSPE) are disordered. Pumilio repeat units lie at residues 524-562 (AVTT…QITS) and 563-600 (RFSG…RFAE).

The protein resides in the nucleus. It is found in the nucleolus. Functionally, RNA-binding nucleolar protein required for pre-rRNA processing. Involved in production of 18S rRNA and assembly of small ribosomal subunit. The protein is Nucleolar protein 9 (NOP9) of Paracoccidioides brasiliensis (strain Pb18).